The chain runs to 268 residues: Calpain small subunit 1 (268 aa).

Position 1 is an N-acetylmethionine (Met-1). A Phosphoserine modification is found at Ser-6. The region spanning 91–125 (EANESEEVRQFRRLFAQLAGDDMEVSATELMNILN) is the EF-hand 1; atypical domain. Ca(2+)-binding residues include Ala-109, Asp-112, Glu-114, Glu-119, Asp-137, Asp-152, Asp-154, Thr-156, Lys-158, and Glu-163. EF-hand domains are found at residues 139–172 (FGIDTCRSMVAVMDSDTTGKLGFEEFKYLWNNIK), 169–204 (NNIKRWQAIYKQFDTDRSGTICSSELPGAFEAAGFH), 205–233 (LNEHLYNMIIRRYSDESGNMDFDNFISCL), and 234–268 (VRLDAMFRAFKSLDKDGTGQIQVNIQEWLQLTMYS). Lys-179 carries the post-translational modification N6-acetyllysine. Positions 182, 184, 186, 188, 193, and 225 each coordinate Ca(2+).

In terms of assembly, homodimer or heterodimer of a large (catalytic) and a small (regulatory) subunit. In presence of calcium, the heterodimer dissociates.

It localises to the cytoplasm. Its subcellular location is the cell membrane. Regulatory subunit of the calcium-regulated non-lysosomal thiol-protease which catalyzes limited proteolysis of substrates involved in cytoskeletal remodeling and signal transduction. Essential for embryonic development. The polypeptide is Calpain small subunit 1 (CAPNS1) (Homo sapiens (Human)).